The sequence spans 84 residues: Toxin Cex12 (84 aa).

The N-terminal stretch at Met1–Ala19 is a signal peptide. Positions Asn20–Arg83 constitute an LCN-type CS-alpha/beta domain. Disulfide bonds link Cys31–Cys82, Cys35–Cys58, Cys44–Cys63, and Cys48–Cys65.

The protein belongs to the long (4 C-C) scorpion toxin superfamily. Sodium channel inhibitor family. Beta subfamily. As to expression, expressed by the venom gland.

The protein resides in the secreted. Its function is as follows. Beta toxins bind voltage-independently at site-4 of sodium channels (Nav) and shift the voltage of activation toward more negative potentials thereby affecting sodium channel activation and promoting spontaneous and repetitive firing. The sequence is that of Toxin Cex12 from Centruroides exilicauda (Bark scorpion).